A 128-amino-acid polypeptide reads, in one-letter code: Small ribosomal subunit protein uS9 (128 aa).

The protein belongs to the universal ribosomal protein uS9 family.

The protein is Small ribosomal subunit protein uS9 of Amoebophilus asiaticus (strain 5a2).